Reading from the N-terminus, the 332-residue chain is GTP 3',8-cyclase (332 aa).

The region spanning 9–234 (TFGRRISYLR…DSDHRTGGPS (226 aa)) is the Radical SAM core domain. Residue R18 participates in GTP binding. Residues C25 and C29 each contribute to the [4Fe-4S] cluster site. Y31 contacts S-adenosyl-L-methionine. C32 contributes to the [4Fe-4S] cluster binding site. R67 is a binding site for GTP. G71 serves as a coordination point for S-adenosyl-L-methionine. T100 is a binding site for GTP. S124 provides a ligand contact to S-adenosyl-L-methionine. A GTP-binding site is contributed by K160. M194 lines the S-adenosyl-L-methionine pocket. Residues C257 and C260 each contribute to the [4Fe-4S] cluster site. Residue 262-264 (RVR) coordinates GTP. C274 is a [4Fe-4S] cluster binding site.

The protein belongs to the radical SAM superfamily. MoaA family. As to quaternary structure, monomer and homodimer. [4Fe-4S] cluster is required as a cofactor.

The catalysed reaction is GTP + AH2 + S-adenosyl-L-methionine = (8S)-3',8-cyclo-7,8-dihydroguanosine 5'-triphosphate + 5'-deoxyadenosine + L-methionine + A + H(+). It functions in the pathway cofactor biosynthesis; molybdopterin biosynthesis. Its function is as follows. Catalyzes the cyclization of GTP to (8S)-3',8-cyclo-7,8-dihydroguanosine 5'-triphosphate. In Erythrobacter litoralis (strain HTCC2594), this protein is GTP 3',8-cyclase.